Reading from the N-terminus, the 2617-residue chain is DNA-directed RNA polymerase subunit beta'' (2617 aa).

4 residues coordinate Zn(2+): Cys-263, Cys-334, Cys-341, and Cys-344.

This sequence belongs to the RNA polymerase beta' chain family. RpoC2 subfamily. In plastids the minimal PEP RNA polymerase catalytic core is composed of four subunits: alpha, beta, beta', and beta''. When a (nuclear-encoded) sigma factor is associated with the core the holoenzyme is formed, which can initiate transcription. Zn(2+) serves as cofactor.

It is found in the plastid. The protein localises to the chloroplast. It catalyses the reaction RNA(n) + a ribonucleoside 5'-triphosphate = RNA(n+1) + diphosphate. Functionally, DNA-dependent RNA polymerase catalyzes the transcription of DNA into RNA using the four ribonucleoside triphosphates as substrates. In Oedogonium cardiacum (Filamentous green alga), this protein is DNA-directed RNA polymerase subunit beta''.